The sequence spans 499 residues: U4/U6 small nuclear ribonucleoprotein Prp31 (499 aa).

The interval 1–37 (MSLADELLADLEEAAEEEEGGSYGEEEEEPAIEDVQE) is disordered. Residues 7 to 37 (LLADLEEAAEEEEGGSYGEEEEEPAIEDVQE) show a composition bias toward acidic residues. Coiled coils occupy residues 85 to 120 (EAAP…KYSK) and 181 to 215 (EEEL…MSFI). In terms of domain architecture, Nop spans 215–333 (IAPNLSIIIG…IERKFDKWQE (119 aa)). A disordered region spans residues 334–357 (PPPVKQVKPLPAPLDGQRKKRGGR). Residues 351–364 (RKKRGGRRYRKMKE) carry the Nuclear localization signal (NLS) motif. Phosphoserine is present on residues Ser379, Ser395, and Ser432. Position 438 is an N6-acetyllysine (Lys438). At Ser439 the chain carries Phosphoserine. The residue at position 440 (Thr440) is a Phosphothreonine. Ser450 is modified (phosphoserine). The residue at position 455 (Thr455) is a Phosphothreonine. Residues Lys471 and Lys478 each participate in a glycyl lysine isopeptide (Lys-Gly) (interchain with G-Cter in SUMO2) cross-link.

It belongs to the PRP31 family. In terms of assembly, identified in the spliceosome B complex. Component of the U4/U6-U5 tri-snRNP complex composed of the U4, U6 and U5 snRNAs and at least PRPF3, PRPF4, PRPF6, PRPF8, PRPF31, SNRNP200, TXNL4A, SNRNP40, DDX23, CD2BP2, PPIH, SNU13, EFTUD2, SART1 and USP39. Interacts with a complex formed by SNU13 and U4 snRNA, but not with SNU13 or U4 snRNA alone. The complex formed by SNU13 and PRPF31 also binds U4atac snRNA, a characteristic component of specific, less abundant spliceosomal complexes. Interacts with PRPF6/U5 snRNP-associated 102 kDa protein. Component of some MLL1/MLL complex, at least composed of the core components KMT2A/MLL1, ASH2L, HCFC1/HCF1, WDR5 and RBBP5, as well as the facultative components BACC1, CHD8, E2F6, HSP70, INO80C, KANSL1, LAS1L, MAX, MCRS1, MGA, KAT8/MOF, PELP1, PHF20, PRP31, RING2, RUVB1/TIP49A, RUVB2/TIP49B, SENP3, TAF1, TAF4, TAF6, TAF7, TAF9 and TEX10. Interacts (via its NLS) with CTNNBL1. Interacts with USH1G. Post-translationally, phosphorylated by PRP4K during spliceosome assembly. In terms of tissue distribution, ubiquitously expressed.

Its subcellular location is the nucleus. The protein localises to the nucleus speckle. It localises to the cajal body. Involved in pre-mRNA splicing as component of the spliceosome. Required for the assembly of the U4/U5/U6 tri-snRNP complex, one of the building blocks of the spliceosome. The polypeptide is U4/U6 small nuclear ribonucleoprotein Prp31 (Homo sapiens (Human)).